Consider the following 221-residue polypeptide: Kynurenine formamidase (221 aa).

Phe-30 contacts substrate. Residues His-60, His-64, and Asp-66 each contribute to the Zn(2+) site. His-70 functions as the Proton donor/acceptor in the catalytic mechanism. 2 residues coordinate Zn(2+): His-172 and Glu-184.

The protein belongs to the Cyclase 1 superfamily. KynB family. Homodimer. Zn(2+) is required as a cofactor.

It carries out the reaction N-formyl-L-kynurenine + H2O = L-kynurenine + formate + H(+). Its pathway is amino-acid degradation; L-tryptophan degradation via kynurenine pathway; L-kynurenine from L-tryptophan: step 2/2. Functionally, catalyzes the hydrolysis of N-formyl-L-kynurenine to L-kynurenine, the second step in the kynurenine pathway of tryptophan degradation. The protein is Kynurenine formamidase of Polaromonas sp. (strain JS666 / ATCC BAA-500).